The chain runs to 167 residues: Peptide deformylase (167 aa).

Fe cation is bound by residues Cys91 and His133. Residue Glu134 is part of the active site. His137 is a Fe cation binding site.

Belongs to the polypeptide deformylase family. Fe(2+) is required as a cofactor.

The catalysed reaction is N-terminal N-formyl-L-methionyl-[peptide] + H2O = N-terminal L-methionyl-[peptide] + formate. Its function is as follows. Removes the formyl group from the N-terminal Met of newly synthesized proteins. Requires at least a dipeptide for an efficient rate of reaction. N-terminal L-methionine is a prerequisite for activity but the enzyme has broad specificity at other positions. This chain is Peptide deformylase, found in Baumannia cicadellinicola subsp. Homalodisca coagulata.